A 358-amino-acid chain; its full sequence is Ion-translocating oxidoreductase complex subunit D (358 aa).

4 consecutive transmembrane segments (helical) span residues 19–39 (IMLW…YYFG), 41–61 (GVLL…FIAI), 79–99 (LTAL…VIII), and 125–145 (IGYV…MPPI). Threonine 186 carries the FMN phosphoryl threonine modification. The next 5 membrane-spanning stretches (helical) occupy residues 220-240 (FAQG…FLIL), 248-268 (IPVA…FTGF), 271-291 (LSAI…FIAT), 297-317 (SITP…VYLI), and 321-341 (GNYP…VPLI).

The protein belongs to the NqrB/RnfD family. As to quaternary structure, the complex is composed of six subunits: RnfA, RnfB, RnfC, RnfD, RnfE and RnfG. The cofactor is FMN.

The protein localises to the cell inner membrane. Functionally, part of a membrane-bound complex that couples electron transfer with translocation of ions across the membrane. In Haemophilus influenzae (strain PittEE), this protein is Ion-translocating oxidoreductase complex subunit D.